Consider the following 691-residue polypeptide: ATP-dependent zinc metalloprotease FtsH 2 (691 aa).

The disordered stretch occupies residues 1–48 (MTDEPQSDEQQTTEQERPLGTKRATRADGLRRPGVRSGLAERRSPAAD). Topologically, residues 1–64 (MTDEPQSDEQ…AAVRRFLLRD (64 aa)) are cytoplasmic. Over residues 14–31 (EQERPLGTKRATRADGLR) the composition is skewed to basic and acidic residues. Residues 65–85 (VFALGLMIAALVIVILFFTLL) form a helical membrane-spanning segment. At 86–168 (GATKPTSSGT…AVKQQPGKAQ (83 aa)) the chain is on the extracellular side. A helical membrane pass occupies residues 169–189 (VTIVVQFLLPILLLVCLFALF). Residues 190–691 (MRIGQDGGAG…ERGSARDRDA (502 aa)) lie on the Cytoplasmic side of the membrane. Position 265 to 272 (265 to 272 (GPPGTGKT)) interacts with ATP. Zn(2+) is bound at residue His486. Glu487 is an active-site residue. Zn(2+) is bound by residues His490 and Asp563.

It in the central section; belongs to the AAA ATPase family. This sequence in the C-terminal section; belongs to the peptidase M41 family. Homohexamer. It depends on Zn(2+) as a cofactor.

The protein localises to the cell membrane. Its function is as follows. Acts as a processive, ATP-dependent zinc metallopeptidase for both cytoplasmic and membrane proteins. Plays a role in the quality control of integral membrane proteins. This Conexibacter woesei (strain DSM 14684 / CCUG 47730 / CIP 108061 / JCM 11494 / NBRC 100937 / ID131577) protein is ATP-dependent zinc metalloprotease FtsH 2.